Here is a 429-residue protein sequence, read N- to C-terminus: FAD-dependent monooxygenase azaH (429 aa).

The chain crosses the membrane as a helical span at residues 5–25 (SIEVAIIGAGITGITLALGLL). Residues glutamate 35 and glycine 48 each contribute to the FAD site. N-linked (GlcNAc...) asparagine glycosylation is found at asparagine 75 and asparagine 87. Residue arginine 116 coordinates FAD. Arginine 199 is a catalytic residue. FAD is bound by residues aspartate 315 and alanine 328.

This sequence belongs to the paxM FAD-dependent monooxygenase family. The cofactor is FAD.

It is found in the membrane. It participates in secondary metabolite biosynthesis. In terms of biological role, FAD-dependent monooxygenase; part of the gene cluster that mediates the biosynthesis of azaphilones, a class of fungal metabolites characterized by a highly oxygenated pyrano-quinone bicyclic core and exhibiting a broad range of bioactivities. In the first step, the non-reducing polyketide synthase azaA forms the hexaketide precursor from successive condensations of five malonyl-CoA units, presumably with a simple acetyl-CoA starter unit. The reactive polyketide chain then undergoes a PT-mediated C2-C7 cyclization to afford the aromatic ring and is eventually released as an aldehyde through the R-domain. The putative ketoreductase azaE is proposed to catalyze the reduction of the terminal ketone resulting in the early culture product FK17-P2a. The monooxygenase azaH was demonstrated to be the only enzyme required to convert FK17-P2a to azanigerone E. AzaH first hydroxylates the benzaldehyde intermediate FK17-P2a at C4, which triggers the formation of the pyran-ring to afford azanigerone E. In parallel, the 2,4-dimethylhexanoyl chain is synthesized by the HR-PKS azaB and is proposed to be transferred to the C4-hydroxyl of azanigerone E by the acyltransferase azaD directly from the ACP domain of azaB. Alternatively, the 2,4-dimethyl-hexanoyl chain may be offloaded from the HR-PKS as a carboxylic acid and converted to an acyl-CoA by azaF. The resulting acyl-CoA molecule could then be taken up as a substrate by AzaD to form azanigerone B. To yield the carboxylic acid substituent in azanigerone A, the hydroxypropyl side chain of azanigerone B would need to undergo a C-C oxidative cleavage catalyzed by cytochrome P450 AzaI. AzaI is proposed to act on a vicinal diol that leads to a C-C bond scission either through an alkoxyradical intermediate or a peroxy complex. In the biosynthesis of azanigerone A, azanigerone B first undergoes hydroxylation at C10, possibly catalyzed by one of the two FAD-dependent monooxygenases encoded in the cluster, azaG or azaL, resulting in the vicinal diol azanigerone C. Oxidative cleavage of azanigerone C by azaI would yield the corresponding aldehyde derivative of azanigerone A. Finally, the dehydrogenase azaJ is proposed to convert the aldehyde functional group into the carboxylic acid, completing the conversion from azanigerone B to azanigerone A. Alternatively, the oxidation of aldehyde to carboxylic acid may be catalyzed by the same P450 enzyme azaI via consecutive oxidation or by endogenous alcohol dehydrogenase. This is FAD-dependent monooxygenase azaH from Aspergillus niger (strain ATCC 1015 / CBS 113.46 / FGSC A1144 / LSHB Ac4 / NCTC 3858a / NRRL 328 / USDA 3528.7).